Reading from the N-terminus, the 339-residue chain is MKAAVVNEFKKALEIKEVERPKLEEGEVLVKIEACGVCHTDLHAAHGDWPIKPKLPLIPGHEGVGIVVEVAKGVKSIKVGDRVGIPWLYSACGECEYCLTGQETLCPHQLNGGYSVDGGYAEYCKAPADYVAKIPDNLDPVEVAPILCAGVTTYKALKVSGARPGEWVAIYGIGGLGHIALQYAKAMGLNVVAVDISDEKSKLAKDLGADIAINGLKEDPVKAIHDQVGGVHAAISVAVNKKAFEQAYQSVKRGGTLVVVGLPNADLPIPIFDTVLNGVSVKGSIVGTRKDMQEALDFAARGKVRPIVETAELEEINEVFERMEKGKINGRIVLKLKED.

7 residues coordinate Zn(2+): C38, H61, C92, C95, C98, C106, and C148. NAD(+) is bound by residues G172–G177, D195, K200, V260–L262, and R331.

The protein belongs to the zinc-containing alcohol dehydrogenase family. Zn(2+) is required as a cofactor.

It catalyses the reaction a primary alcohol + NAD(+) = an aldehyde + NADH + H(+). The enzyme catalyses a secondary alcohol + NAD(+) = a ketone + NADH + H(+). Its activity is regulated as follows. The rate-limiting step is NADH release. Catabolite repression. Its function is as follows. Active with primary alcohols, including methanol. This chain is Alcohol dehydrogenase (adh), found in Geobacillus stearothermophilus (Bacillus stearothermophilus).